The sequence spans 60 residues: Potassium channel toxin alpha-KTx 15.8 (60 aa).

The signal sequence occupies residues methionine 1–cysteine 22. Position 23 is a pyrrolidone carboxylic acid (glutamine 23). 3 disulfide bridges follow: cysteine 30-cysteine 50, cysteine 35-cysteine 55, and cysteine 39-cysteine 57.

The protein belongs to the short scorpion toxin superfamily. Potassium channel inhibitor family. Alpha-KTx 15 subfamily. In terms of tissue distribution, expressed by the venom gland.

It is found in the secreted. Its function is as follows. Blocker of A-type voltage-gated potassium channels of cerebellar granular cells. May also inhibit Kv4/KCND when coexpressed with DPP6 or DPP10. The occlusion of the outer entry of the K(+) conducting pore is partially reversible and affects both open and closed channels. It shares the same target in rat brain than BmTX3 (AC Q8I0L5) and AmmTX3 (AC P60208). Also shows a weak inhibition on Kv1.2/KCNA2 and Kv1.3/KCNA3 voltage-gated potassium channels. The polypeptide is Potassium channel toxin alpha-KTx 15.8 (Olivierus martensii (Manchurian scorpion)).